Here is a 118-residue protein sequence, read N- to C-terminus: Large ribosomal subunit protein bL20 (118 aa).

It belongs to the bacterial ribosomal protein bL20 family.

Its function is as follows. Binds directly to 23S ribosomal RNA and is necessary for the in vitro assembly process of the 50S ribosomal subunit. It is not involved in the protein synthesizing functions of that subunit. This is Large ribosomal subunit protein bL20 from Agathobacter rectalis (strain ATCC 33656 / DSM 3377 / JCM 17463 / KCTC 5835 / VPI 0990) (Eubacterium rectale).